The primary structure comprises 301 residues: Protoheme IX farnesyltransferase 2 (301 aa).

9 helical membrane passes run 29-49, 51-71, 101-121, 123-143, 150-170, 177-197, 223-243, 244-264, and 281-301; these read VVAL…PTAV, VQPL…AAAL, ALIF…VLVN, LTAW…TAYL, NIVI…TAVT, ALLL…ALAI, CILL…LVGM, CGPM…YKAW, and FSIY…YLWS.

Belongs to the UbiA prenyltransferase family. Protoheme IX farnesyltransferase subfamily.

Its subcellular location is the cell inner membrane. The enzyme catalyses heme b + (2E,6E)-farnesyl diphosphate + H2O = Fe(II)-heme o + diphosphate. It functions in the pathway porphyrin-containing compound metabolism; heme O biosynthesis; heme O from protoheme: step 1/1. Converts heme B (protoheme IX) to heme O by substitution of the vinyl group on carbon 2 of heme B porphyrin ring with a hydroxyethyl farnesyl side group. This is Protoheme IX farnesyltransferase 2 from Shewanella sp. (strain W3-18-1).